Reading from the N-terminus, the 321-residue chain is Lipoyl synthase (321 aa).

C68, C73, C79, C94, C98, C101, and S308 together coordinate [4Fe-4S] cluster. The Radical SAM core domain occupies 80–297 (FNHGTATFMI…KALADELGFT (218 aa)).

This sequence belongs to the radical SAM superfamily. Lipoyl synthase family. [4Fe-4S] cluster is required as a cofactor.

It localises to the cytoplasm. It carries out the reaction [[Fe-S] cluster scaffold protein carrying a second [4Fe-4S](2+) cluster] + N(6)-octanoyl-L-lysyl-[protein] + 2 oxidized [2Fe-2S]-[ferredoxin] + 2 S-adenosyl-L-methionine + 4 H(+) = [[Fe-S] cluster scaffold protein] + N(6)-[(R)-dihydrolipoyl]-L-lysyl-[protein] + 4 Fe(3+) + 2 hydrogen sulfide + 2 5'-deoxyadenosine + 2 L-methionine + 2 reduced [2Fe-2S]-[ferredoxin]. The protein operates within protein modification; protein lipoylation via endogenous pathway; protein N(6)-(lipoyl)lysine from octanoyl-[acyl-carrier-protein]: step 2/2. Functionally, catalyzes the radical-mediated insertion of two sulfur atoms into the C-6 and C-8 positions of the octanoyl moiety bound to the lipoyl domains of lipoate-dependent enzymes, thereby converting the octanoylated domains into lipoylated derivatives. This Shewanella oneidensis (strain ATCC 700550 / JCM 31522 / CIP 106686 / LMG 19005 / NCIMB 14063 / MR-1) protein is Lipoyl synthase.